The chain runs to 306 residues: Glutaminase (306 aa).

Substrate-binding residues include Ser64, Asn115, Glu159, Asn166, Tyr190, Tyr242, and Val260.

This sequence belongs to the glutaminase family. As to quaternary structure, homotetramer.

The catalysed reaction is L-glutamine + H2O = L-glutamate + NH4(+). In Vibrio parahaemolyticus serotype O3:K6 (strain RIMD 2210633), this protein is Glutaminase.